Here is a 180-residue protein sequence, read N- to C-terminus: GTP cyclohydrolase 1 (180 aa).

Zn(2+)-binding residues include Cys-71, His-74, and Cys-142.

It belongs to the GTP cyclohydrolase I family. Toroid-shaped homodecamer, composed of two pentamers of five dimers.

It catalyses the reaction GTP + H2O = 7,8-dihydroneopterin 3'-triphosphate + formate + H(+). The protein operates within cofactor biosynthesis; 7,8-dihydroneopterin triphosphate biosynthesis; 7,8-dihydroneopterin triphosphate from GTP: step 1/1. This Helicobacter pylori (strain ATCC 700392 / 26695) (Campylobacter pylori) protein is GTP cyclohydrolase 1 (folE).